The primary structure comprises 316 residues: Ribosomal protein L11 methyltransferase (316 aa).

S-adenosyl-L-methionine-binding residues include threonine 157, glycine 178, aspartate 200, and asparagine 243.

It belongs to the methyltransferase superfamily. PrmA family.

It localises to the cytoplasm. It catalyses the reaction L-lysyl-[protein] + 3 S-adenosyl-L-methionine = N(6),N(6),N(6)-trimethyl-L-lysyl-[protein] + 3 S-adenosyl-L-homocysteine + 3 H(+). In terms of biological role, methylates ribosomal protein L11. This Streptococcus pneumoniae serotype 4 (strain ATCC BAA-334 / TIGR4) protein is Ribosomal protein L11 methyltransferase.